The sequence spans 317 residues: EAPKMCGVTQNWESYEPIKKASQSNLTPAHQRYIELVIVADHGMFTKYNGDSDKIREWVRQMVNTVDEIYSYMYIDVALAGLEIWSNEDLINVQPAAPHTLDSFGKWRERDLLHRIHHDNAMLLTAIDFDGPTIGLAYVGTMCKPKGSTGVVQDHSTINLRVAVTMAHEIGHNLGIHHDTGSCSCGGYSCIMSPVISHEPSKYFSDCSYTQCWDFIMNQKPQCILNKPLRTDTVSTPVSGNELLEAGEECDCGSPGNPCCDAATCKLRQGAQCAEGLCCDQCRFMKEGTICRRARGDDLDDYCNGISAGCPRNPFHA.

Residues 1-26 (EAPKMCGVTQNWESYEPIKKASQSNL) constitute a propeptide that is removed on maturation. The region spanning 32–228 (RYIELVIVAD…QKPQCILNKP (197 aa)) is the Peptidase M12B domain. Positions 35 and 119 each coordinate Ca(2+). 3 disulfide bridges follow: C143–C223, C183–C207, and C185–C190. H168 is a Zn(2+) binding site. The active site involves E169. Residues H172 and H178 each contribute to the Zn(2+) site. 2 residues coordinate Ca(2+): C223 and N226. The propeptide occupies 229-244 (LRTDTVSTPVSGNELL). One can recognise a Disintegrin domain in the interval 236–317 (TPVSGNELLE…AGCPRNPFHA (82 aa)). Cystine bridges form between C250/C259, C252/C260, C265/C279, C273/C303, C278/C282, and C291/C310. Residues 295-297 (RGD) carry the Cell attachment site motif.

The protein belongs to the venom metalloproteinase (M12B) family. P-II subfamily. P-IIa sub-subfamily. As to quaternary structure, monomer. It depends on Zn(2+) as a cofactor. Expressed by the venom gland.

It is found in the secreted. In terms of biological role, metalloproteinase that impairs hemostasis in the envenomed animal. Its function is as follows. Inhibits GPIIb/GPIIIa (ITGA2B/ITGB3) binding to immobilized fibrinogen with an IC(50) of 2.2 nM and ADP-induced platelet aggregation with an IC(50) of 131 nM, respectively. Inhibits angiogenesis. By binding to vitronectin receptor (alpha-V/beta-3 (ITGAV/ITGB3)), also induces apoptosis of endothelial cells by blocking their attachment to extracellular matrix proteins. Inhibits platelet aggregation induced by ADP (IC(50) is 30 nM), collagen (IC(50) is 500 nM), thrombin and epinephrin (IC(50) is 160 nM). The protein is Zinc metalloproteinase/disintegrin of Gloydius brevicauda (Korean slamosa snake).